Here is a 288-residue protein sequence, read N- to C-terminus: ATP phosphoribosyltransferase (288 aa).

It belongs to the ATP phosphoribosyltransferase family. Long subfamily. Mg(2+) serves as cofactor.

Its subcellular location is the cytoplasm. It carries out the reaction 1-(5-phospho-beta-D-ribosyl)-ATP + diphosphate = 5-phospho-alpha-D-ribose 1-diphosphate + ATP. Its pathway is amino-acid biosynthesis; L-histidine biosynthesis; L-histidine from 5-phospho-alpha-D-ribose 1-diphosphate: step 1/9. With respect to regulation, feedback inhibited by histidine. In terms of biological role, catalyzes the condensation of ATP and 5-phosphoribose 1-diphosphate to form N'-(5'-phosphoribosyl)-ATP (PR-ATP). Has a crucial role in the pathway because the rate of histidine biosynthesis seems to be controlled primarily by regulation of HisG enzymatic activity. This chain is ATP phosphoribosyltransferase, found in Methanococcus maripaludis (strain C5 / ATCC BAA-1333).